The following is a 162-amino-acid chain: Transcriptional repressor NrdR (162 aa).

The segment at 1 to 21 is disordered; sequence MNCPDCGDEQTRVIDTETSAD. A zinc finger lies at 3–34; it reads CPDCGDEQTRVIDTETSADGTSVRRRRECQRC. The ATP-cone domain maps to 49–139; the sequence is LQVKKRNGTI…VYKAFSEPQE (91 aa).

It belongs to the NrdR family. Zn(2+) serves as cofactor.

Negatively regulates transcription of bacterial ribonucleotide reductase nrd genes and operons by binding to NrdR-boxes. The chain is Transcriptional repressor NrdR from Halorubrum lacusprofundi (strain ATCC 49239 / DSM 5036 / JCM 8891 / ACAM 34).